A 102-amino-acid polypeptide reads, in one-letter code: NADH-quinone oxidoreductase subunit K 2 (102 aa).

Helical transmembrane passes span 6-26, 30-50, and 66-86; these read LEAF…GIIA, LVTV…ALVG, and FIIA…IAIF.

It belongs to the complex I subunit 4L family. In terms of assembly, NDH-1 is composed of 14 different subunits. Subunits NuoA, H, J, K, L, M, N constitute the membrane sector of the complex.

The protein resides in the cell inner membrane. The enzyme catalyses a quinone + NADH + 5 H(+)(in) = a quinol + NAD(+) + 4 H(+)(out). In terms of biological role, NDH-1 shuttles electrons from NADH, via FMN and iron-sulfur (Fe-S) centers, to quinones in the respiratory chain. The immediate electron acceptor for the enzyme in this species is believed to be ubiquinone. Couples the redox reaction to proton translocation (for every two electrons transferred, four hydrogen ions are translocated across the cytoplasmic membrane), and thus conserves the redox energy in a proton gradient. The polypeptide is NADH-quinone oxidoreductase subunit K 2 (Aquifex aeolicus (strain VF5)).